The sequence spans 349 residues: Mitogen-activated protein kinase sty1 (349 aa).

The Protein kinase domain occupies 20–299; that stretch reads YSDLQPIGMG…AADALAHNYL (280 aa). Residues 26-34 and lysine 49 each bind ATP; that span reads IGMGAFGLV. Catalysis depends on aspartate 141, which acts as the Proton acceptor. Phosphothreonine is present on threonine 171. The short motif at 171-173 is the TXY element; it reads TGY. Position 173 is a phosphotyrosine (tyrosine 173). Serine 175 bears the Phosphoserine mark. Threonine 176 is subject to Phosphothreonine. Residues 176–178 carry the TXY motif; sequence TRY.

Belongs to the protein kinase superfamily. Ser/Thr protein kinase family. MAP kinase subfamily. HOG1 sub-subfamily. Interacts with cdc37, cmk2, hal4, sin1 and srk1. Requires Mg(2+) as cofactor. Dually phosphorylated on Thr-171 and Tyr-173, which activates the enzyme. Phosphorylated by wis1 in response to osmotic stress, nutrient limitation, hydrogen peroxide and arsenite. Dephosphorylated by pyp1 and pyp2.

The protein localises to the cytoplasm. The protein resides in the nucleus. The catalysed reaction is L-seryl-[protein] + ATP = O-phospho-L-seryl-[protein] + ADP + H(+). It catalyses the reaction L-threonyl-[protein] + ATP = O-phospho-L-threonyl-[protein] + ADP + H(+). With respect to regulation, activated by the MAPK kinase wisl, and negatively regulated by pypl and pyp2 tyrosine phosphatases. In terms of biological role, proline-directed serine/threonine-protein kinase involved in a signal transduction pathway that is activated by changes in the osmolarity of the extracellular environment. Controls osmotic regulation of transcription of target genes. Involved in osmoregulation and stress response pathways leading to an efficient start of sexual differentiation. Supports translation initiation and facilitates adaptation to environmental stress in part through reducing eIF2-alpha phosphorylation. Links the cell-cycle G2/M control with changes in the extracellular environment that affect cell physiology. Phosphorylates atf1 and mkp1. In conjunction with hal4, has a role in the cellular resistance to toxic cations such as Na(+), Li(+) and Ca(2+). Involved in resistance to arsenite, methylglyoxal and hydrogen peroxide. Involved in induction of thermotolerance in mRNA export, as well as in vacuolar fission. The polypeptide is Mitogen-activated protein kinase sty1 (sty1) (Schizosaccharomyces pombe (strain 972 / ATCC 24843) (Fission yeast)).